The following is a 389-amino-acid chain: S-adenosylmethionine synthase (389 aa).

His15 is a binding site for ATP. Asp17 serves as a coordination point for Mg(2+). Position 43 (Glu43) interacts with K(+). Positions 56 and 99 each coordinate L-methionine. Residues 99–109 form a flexible loop region; that stretch reads QSSDIQYSIDH. Residues 166 to 168, 232 to 233, Asp241, 247 to 248, Ser264, and Lys268 each bind ATP; these read DAK, RF, and RK. An L-methionine-binding site is contributed by Asp241. L-methionine is bound at residue Lys272.

The protein belongs to the AdoMet synthase family. In terms of assembly, homotetramer; dimer of dimers. The cofactor is Mg(2+). It depends on K(+) as a cofactor.

It localises to the cytoplasm. The enzyme catalyses L-methionine + ATP + H2O = S-adenosyl-L-methionine + phosphate + diphosphate. It participates in amino-acid biosynthesis; S-adenosyl-L-methionine biosynthesis; S-adenosyl-L-methionine from L-methionine: step 1/1. Functionally, catalyzes the formation of S-adenosylmethionine (AdoMet) from methionine and ATP. The overall synthetic reaction is composed of two sequential steps, AdoMet formation and the subsequent tripolyphosphate hydrolysis which occurs prior to release of AdoMet from the enzyme. The polypeptide is S-adenosylmethionine synthase (Blochmanniella pennsylvanica (strain BPEN)).